The primary structure comprises 231 residues: ATP phosphoribosyltransferase (231 aa).

This sequence belongs to the ATP phosphoribosyltransferase family. Short subfamily. As to quaternary structure, heteromultimer composed of HisG and HisZ subunits.

Its subcellular location is the cytoplasm. The catalysed reaction is 1-(5-phospho-beta-D-ribosyl)-ATP + diphosphate = 5-phospho-alpha-D-ribose 1-diphosphate + ATP. The protein operates within amino-acid biosynthesis; L-histidine biosynthesis; L-histidine from 5-phospho-alpha-D-ribose 1-diphosphate: step 1/9. In terms of biological role, catalyzes the condensation of ATP and 5-phosphoribose 1-diphosphate to form N'-(5'-phosphoribosyl)-ATP (PR-ATP). Has a crucial role in the pathway because the rate of histidine biosynthesis seems to be controlled primarily by regulation of HisG enzymatic activity. The sequence is that of ATP phosphoribosyltransferase (hisG) from Rhizobium meliloti (strain 1021) (Ensifer meliloti).